A 174-amino-acid polypeptide reads, in one-letter code: Stigma-specific STIG1-like protein 4 (174 aa).

The first 25 residues, 1–25 (MMSIKLTLCALIFFLLNSLLHHVLG), serve as a signal peptide directing secretion. The disordered stretch occupies residues 140–174 (PSSQPGKRHRRHKFHRPRPPPSPDSKLNYDDHDDE). Basic residues predominate over residues 145 to 157 (GKRHRRHKFHRPR).

The protein belongs to the STIG1 family.

The protein localises to the secreted. In terms of biological role, endosperm-specific cysteine-rich protein that acts downstream of BHLH95/ZOU to modify the interface between embryo and endosperm and mediate the separation of these two tissues during seed development. Necessary for the biogenesis of the embryo sheath, an extracuticular endosperm-derived structure at the surface of the embryo. Required for the separation of embryo and endosperm, and for normal progression of the embryo through the endosperm tissue. Required for the formation of a normal embryonic cuticle. The chain is Stigma-specific STIG1-like protein 4 from Arabidopsis thaliana (Mouse-ear cress).